An 801-amino-acid chain; its full sequence is Phenylalanine--tRNA ligase beta subunit (801 aa).

The tRNA-binding domain maps to 39–153 (AEGLSKLVVG…DEAVPGDAIF (115 aa)). One can recognise a B5 domain in the interval 406 to 481 (TEPVEVSTNL…RIYGYDKLPT (76 aa)). Mg(2+)-binding residues include Asp-459, Asp-465, Glu-468, and Glu-469. The 94-residue stretch at 708–801 (TKFPAMTRDI…LTEQVGAEVR (94 aa)) folds into the FDX-ACB domain.

The protein belongs to the phenylalanyl-tRNA synthetase beta subunit family. Type 1 subfamily. Tetramer of two alpha and two beta subunits. Mg(2+) is required as a cofactor.

The protein localises to the cytoplasm. It carries out the reaction tRNA(Phe) + L-phenylalanine + ATP = L-phenylalanyl-tRNA(Phe) + AMP + diphosphate + H(+). The chain is Phenylalanine--tRNA ligase beta subunit from Streptococcus pyogenes serotype M3 (strain SSI-1).